Reading from the N-terminus, the 151-residue chain is Large ribosomal subunit protein bL9 (151 aa).

It belongs to the bacterial ribosomal protein bL9 family.

Functionally, binds to the 23S rRNA. The polypeptide is Large ribosomal subunit protein bL9 (Prochlorococcus marinus (strain AS9601)).